Consider the following 345-residue polypeptide: RDS/peripherin-like protein xRDS35 (345 aa).

The Cytoplasmic portion of the chain corresponds to 1-24 (MVLFKAKFSFQRRVKLAQTLWLLS). A helical membrane pass occupies residues 25-43 (WLSVLVGCLTFGMGIFLKV). At 44-61 (QLWIHNEVMENTSAHAVP) the chain is on the lumenal side. A glycan (N-linked (GlcNAc...) asparagine) is linked at asparagine 54. Residues 62–80 (NTVITAGLVGILLGIYAGK) form a helical membrane-spanning segment. At 81–99 (VSQASMDVTKYQRWKSFMM) the chain is on the cytoplasmic side. A helical transmembrane segment spans residues 100–123 (PFFFLAILSCLVCLAALVLSVALR). Topologically, residues 124 to 264 (GTLEESLKIG…LSYYTGIMAT (141 aa)) are lumenal. N-linked (GlcNAc...) asparagine glycosylation occurs at asparagine 229. The chain crosses the membrane as a helical span at residues 265–290 (NGAAVTLSFLLQASVLVSLRYLHTSM). Residues 291–345 (DKISGPDDMEADTEGFILEKGVTETMNTTLEKMKGLFMSNQVETAEGGGEAAAAS) are Cytoplasmic-facing.

Belongs to the PRPH2/ROM1 family. Homodimer; disulfide-linked. Rod specific.

Its subcellular location is the membrane. The protein is RDS/peripherin-like protein xRDS35 (rds35) of Xenopus laevis (African clawed frog).